Consider the following 89-residue polypeptide: DNA/RNA-binding protein Alba (89 aa).

Belongs to the histone-like Alba family.

The protein resides in the cytoplasm. It localises to the chromosome. Its function is as follows. Binds double-stranded DNA tightly but without sequence specificity. Involved in DNA compaction. The polypeptide is DNA/RNA-binding protein Alba (Methanococcus maripaludis (strain DSM 14266 / JCM 13030 / NBRC 101832 / S2 / LL)).